Consider the following 574-residue polypeptide: Intraflagellar transport protein 56 homolog (574 aa).

TPR repeat units lie at residues 20–52 (AQKMPELDDFLSNQDYEGAISLLNHKLKAGNLD), 57–90 (DSLQLWLAHCYYRLRNYEEAANVYTFLMNKDDAP), and 151–184 (LEDRLSLAGVNYSRMHYQDAIEVYTSVLQTSPNL).

It belongs to the IFT56 family. Component of the IFT complex B composed of at least che-2, che-13, dyf-1, dyf-3, dyf-6, dyf-11, dyf-13, ift-20, ift-74, ift-81, ifta-2, osm-1, osm-5 and osm-6.

It localises to the cell projection. The protein resides in the cilium. In terms of biological role, component of the intraflagellar transport (IFT) complex B required for transport of proteins in the motile cilium. May be required for ciliary entrance and transport of specific ciliary cargo proteins such as che-3 which are related to motility. This chain is Intraflagellar transport protein 56 homolog, found in Caenorhabditis elegans.